The chain runs to 141 residues: Hemoglobin subunit mu (141 aa).

The 141-residue stretch at 1–141 folds into the Globin domain; sequence MLSAQERAQI…VAVVLTEKYR (141 aa). Heme b-binding residues include H58 and H87.

Belongs to the globin family. As to expression, expressed in erythroid tissues.

The chain is Hemoglobin subunit mu (HBM) from Homo sapiens (Human).